The primary structure comprises 471 residues: 3-isopropylmalate dehydratase large subunit (471 aa).

3 residues coordinate [4Fe-4S] cluster: C347, C407, and C410.

Belongs to the aconitase/IPM isomerase family. LeuC type 1 subfamily. Heterodimer of LeuC and LeuD. [4Fe-4S] cluster is required as a cofactor.

The catalysed reaction is (2R,3S)-3-isopropylmalate = (2S)-2-isopropylmalate. The protein operates within amino-acid biosynthesis; L-leucine biosynthesis; L-leucine from 3-methyl-2-oxobutanoate: step 2/4. Functionally, catalyzes the isomerization between 2-isopropylmalate and 3-isopropylmalate, via the formation of 2-isopropylmaleate. This is 3-isopropylmalate dehydratase large subunit from Acaryochloris marina (strain MBIC 11017).